Consider the following 714-residue polypeptide: ATP-dependent DNA helicase DinG (714 aa).

In terms of domain architecture, Helicase ATP-binding spans 17–294; that stretch reads ALQDQIPDFI…TCMEQFRPKT (278 aa). 54 to 61 is an ATP binding site; sequence APTGVGKT. Positions 120, 194, 199, and 205 each coordinate [4Fe-4S] cluster. The DEAH box signature appears at 248-251; it reads DEGH. Residues 517–698 enclose the Helicase C-terminal domain; that stretch reads HIAEMAAYFR…VFPIEQPAVP (182 aa).

The protein belongs to the helicase family. DinG subfamily. Type 1 sub-subfamily. It depends on [4Fe-4S] cluster as a cofactor.

The enzyme catalyses Couples ATP hydrolysis with the unwinding of duplex DNA at the replication fork by translocating in the 5'-3' direction. This creates two antiparallel DNA single strands (ssDNA). The leading ssDNA polymer is the template for DNA polymerase III holoenzyme which synthesizes a continuous strand.. It carries out the reaction ATP + H2O = ADP + phosphate + H(+). DNA-dependent ATPase and 5'-3' DNA helicase. Unwinds D-loops, R-loops, forked DNA and G-quadruplex DNA. The sequence is that of ATP-dependent DNA helicase DinG from Salmonella paratyphi A (strain ATCC 9150 / SARB42).